We begin with the raw amino-acid sequence, 481 residues long: Putative cytochrome P450 520B1 (481 aa).

A heme-binding site is contributed by Cys-427.

This sequence belongs to the cytochrome P450 family. Requires heme as cofactor.

This chain is Putative cytochrome P450 520B1 (cyp520B1), found in Dictyostelium discoideum (Social amoeba).